Reading from the N-terminus, the 520-residue chain is F-box/LRR-repeat protein At3g59200 (520 aa).

Residues 6–54 (RDRISSLPNPVVSHILSFLPTKEAASTSVLSKKWRYLFAYVTNLDFDDS) enclose the F-box domain. LRR repeat units follow at residues 170-197 (CVDVQERGFGFVKLLSGCPVLEELVLMN), 219-244 (FCEETYENPKSVSFDTPNLVYLEYSD), and 340-365 (NSEIRWDSLPGLLKNCPNLETLVLKR).

This Arabidopsis thaliana (Mouse-ear cress) protein is F-box/LRR-repeat protein At3g59200.